A 125-amino-acid polypeptide reads, in one-letter code: Nascent polypeptide-associated complex protein (125 aa).

Residues 9-76 (PRMMKQMQKM…SKNTSKTAEK (68 aa)) enclose the NAC-A/B domain.

The protein belongs to the NAC-alpha family. As to quaternary structure, homodimer. Interacts with the ribosome. Binds ribosomal RNA.

Functionally, contacts the emerging nascent chain on the ribosome. This Methanococcus vannielii (strain ATCC 35089 / DSM 1224 / JCM 13029 / OCM 148 / SB) protein is Nascent polypeptide-associated complex protein.